The sequence spans 470 residues: 3-isopropylmalate dehydratase large subunit (470 aa).

Polar residues predominate over residues 294 to 307 (PDQNTGISGSTPNP). The tract at residues 294 to 313 (PDQNTGISGSTPNPSDAADD) is disordered. 3 residues coordinate [4Fe-4S] cluster: cysteine 347, cysteine 407, and cysteine 410.

Belongs to the aconitase/IPM isomerase family. LeuC type 1 subfamily. In terms of assembly, heterodimer of LeuC and LeuD. [4Fe-4S] cluster serves as cofactor.

The catalysed reaction is (2R,3S)-3-isopropylmalate = (2S)-2-isopropylmalate. It functions in the pathway amino-acid biosynthesis; L-leucine biosynthesis; L-leucine from 3-methyl-2-oxobutanoate: step 2/4. Its function is as follows. Catalyzes the isomerization between 2-isopropylmalate and 3-isopropylmalate, via the formation of 2-isopropylmaleate. This chain is 3-isopropylmalate dehydratase large subunit, found in Akkermansia muciniphila (strain ATCC BAA-835 / DSM 22959 / JCM 33894 / BCRC 81048 / CCUG 64013 / CIP 107961 / Muc).